An 828-amino-acid polypeptide reads, in one-letter code: Zinc finger protein 438 (828 aa).

Disordered regions lie at residues 1-29 (MQNS…KGLQ), 143-173 (KSGC…LYKP), and 193-231 (ALTN…PAKQ). Polar residues-rich tracts occupy residues 16–29 (NIPS…KGLQ) and 150–159 (PAQTQMCPQM). 3 consecutive C2H2-type zinc fingers follow at residues 507–529 (HRCH…MNTH), 535–557 (YSCR…MKLH), and 567–590 (MCCE…KEVH). Residues 680–721 (EGTFPGSKGTQEELVQHASPDWKRHPERGKPEKVHSSSEESH) are disordered. The segment covering 689 to 721 (TQEELVQHASPDWKRHPERGKPEKVHSSSEESH) has biased composition (basic and acidic residues). The C2H2-type 4 zinc finger occupies 776–799 (FNCLLCAEMLGRKEDLLHHWKHQH).

It belongs to the krueppel C2H2-type zinc-finger protein family. In terms of tissue distribution, ubiquitous.

It localises to the nucleus. In terms of biological role, isoform 1 acts as a transcriptional repressor. The chain is Zinc finger protein 438 (ZNF438) from Homo sapiens (Human).